The primary structure comprises 368 residues: Ceramide synthase hyl-1 (368 aa).

7 helical membrane-spanning segments follow: residues 27–47 (FVDL…RILW), 92–112 (ILEC…GLYV), 138–158 (IWWY…GSTF), 165–185 (FWQL…SWTI), 191–211 (GTLI…GKLV), 225–245 (FVLF…FIVI), and 275–295 (LIVF…FIIL). A TLC domain is found at 90–303 (KKILECFWRF…ILRIAYRTST (214 aa)). The segment at 306-368 (QAKDVRSDSD…ARHRRAPRKE (63 aa)) is disordered. Positions 343–353 (TDDDDDEGEEE) are enriched in acidic residues. Positions 357–368 (RKARHRRAPRKE) are enriched in basic residues.

This sequence belongs to the sphingosine N-acyltransferase family.

The protein localises to the membrane. The catalysed reaction is a very long-chain fatty acyl-CoA + a sphingoid base = an N-(very-long-chain fatty acyl)-sphingoid base + CoA + H(+). The enzyme catalyses 15-methylhexadecasphinganine + a fatty acyl-CoA = an N-acyl-15-methylhexadecasphinganine + CoA + H(+). It catalyses the reaction a fatty acyl-CoA + sphinganine = an N-acylsphinganine + CoA + H(+). It carries out the reaction sphinganine + tetradecanoyl-CoA = N-(tetradecanoyl)-sphinganine + CoA + H(+). The catalysed reaction is hexacosanoyl-CoA + sphinganine = N-hexacosanoylsphinganine + CoA + H(+). Its pathway is lipid metabolism; sphingolipid metabolism. In terms of biological role, catalyzes the acylation of sphingoid bases to form ceramides, which are key players in cell signaling events such as extending lifespan and enhancing stress resistance. C.elegans contain specific sphingoid bases, which are unique or different in structure compared to the sphingoid bases found in other animals. Two examples of these distinctive compounds are: 15-methylhexadecasphinganine and 15-methylhexadecasphing-4-enine. Exhibits substrate preference for fatty acyl-coA chains containing carbon chain length (C16-C18) and very long chains (24 carbons and more). This chain is Ceramide synthase hyl-1 (hyl-1), found in Caenorhabditis elegans.